Reading from the N-terminus, the 478-residue chain is Isoeugenol monooxygenase (478 aa).

Fe cation is bound by residues histidine 167, histidine 218, histidine 282, and histidine 471.

Belongs to the carotenoid oxygenase family. As to quaternary structure, monomer. Requires Fe(2+) as cofactor.

It catalyses the reaction (E)-isoeugenol + O2 = vanillin + acetaldehyde. Its activity is regulated as follows. Inhibited by HgCl(2), AgNO(3), CuCl(2), phenylhydrazine, 8-hydroxyquinoline, R-cycloserine and p-chloromercuribenzoic acid. Involved in isoeugenol degradation. Catalyzes the oxidative cleavage of the side chain double-bond of isoeugenol to form vanillin and acetaldehyde. This Pseudomonas putida (Arthrobacter siderocapsulatus) protein is Isoeugenol monooxygenase.